The primary structure comprises 1292 residues: Myosin-1 (1292 aa).

The Myosin motor domain occupies 35–714 (VGVSDLTLLS…TLFALENMRD (680 aa)). 128-135 (GESGAGKT) is a binding site for ATP. Residue S356 is modified to Phosphoserine. The interval 403–485 (SIGILDIYGF…PGIFAALNDS (83 aa)) is actin-binding. IQ domains lie at 718-738 (HNMASRIQRAWRRFLQRRIDS) and 739-764 (AIRIQRAIREMKHGNQFEQLRDYGNK). The 191-residue stretch at 770–960 (KERRAMSLLG…TIMVRRGRPG (191 aa)) folds into the TH1 domain. Disordered regions lie at residues 956-991 (RGRPGNCSQRKKPLSTRLPDTYTTRETGYKNAGHPT), 1017-1180 (YSLN…FPLK), and 1227-1258 (PVASSAPLGNSGVATREAGTTSAATAAASAAT). Residues 1062–1081 (MDNSSAAYGNASALPNSAPS) are compositionally biased toward polar residues. Composition is skewed to pro residues over residues 1087–1121 (ASRPVPKPAPRPGPKPGPKPGPKPGPKPAPKPMPR) and 1142–1155 (APPPPPPPPPPPAA). The SH3 domain maps to 1157–1219 (PSEPVYEAAF…PTAYIVESKA (63 aa)). Residues 1240–1258 (ATREAGTTSAATAAASAAT) are compositionally biased toward low complexity.

Belongs to the TRAFAC class myosin-kinesin ATPase superfamily. Myosin family. In terms of processing, phosphorylation of the TEDS site (Ser-356) is required for the polarization of the actin cytoskeleton. Phosphorylation probably activates the myosin-I ATPase activity.

The protein resides in the cytoplasm. Its subcellular location is the cytoskeleton. It is found in the actin patch. In terms of biological role, type-I myosin implicated in the organization of the actin cytoskeleton. Required for proper actin cytoskeleton polarization. At the cell cortex, assembles in patch-like structures together with proteins from the actin-polymerizing machinery and promotes actin assembly. Functions as actin nucleation-promoting factor (NPF) for the Arp2/3 complex. The protein is Myosin-1 (MYO1) of Eremothecium gossypii (strain ATCC 10895 / CBS 109.51 / FGSC 9923 / NRRL Y-1056) (Yeast).